The chain runs to 390 residues: NADH-dependent butanol dehydrogenase B (390 aa).

It belongs to the iron-containing alcohol dehydrogenase family. Homodimer.

It functions in the pathway alcohol metabolism; butanol biosynthesis. In Clostridium acetobutylicum (strain ATCC 824 / DSM 792 / JCM 1419 / IAM 19013 / LMG 5710 / NBRC 13948 / NRRL B-527 / VKM B-1787 / 2291 / W), this protein is NADH-dependent butanol dehydrogenase B (bdhB).